Reading from the N-terminus, the 146-residue chain is MRLLQLLFRASPATLLLVLCLQLGANKAQDNTRKIIIKNFDIPKSVRPNDEVTAVLAVQTELKECMVVKTYLISSIPLQGAFNYKYTACLCDDNPKTFYWDFYTNRTVQIAAVVDVIRELGICPDDAAVIPIKNNRFYTIEILKVE.

Residues 1–28 form the signal peptide; it reads MRLLQLLFRASPATLLLVLCLQLGANKA. Q29 carries the post-translational modification Pyrrolidone carboxylic acid. 2 cysteine pairs are disulfide-bonded: C65–C91 and C89–C123. The N-linked (GlcNAc...) asparagine glycan is linked to N105.

This sequence belongs to the PIP family. As to quaternary structure, monomer. Interacts with AZGP1. In terms of tissue distribution, expressed in pathological conditions of the mammary gland and in several exocrine tissues, such as the lacrimal, salivary, and sweat glands.

The protein resides in the secreted. In Homo sapiens (Human), this protein is Prolactin-inducible protein (PIP).